The following is a 58-amino-acid chain: Small ribosomal subunit protein bS21 (58 aa).

The segment at 27–58 (GVLSEARKHEHYEKPSVKRKKKSEAARKRKFK) is disordered. Basic and acidic residues predominate over residues 31-42 (EARKHEHYEKPS). Basic residues predominate over residues 43–58 (VKRKKKSEAARKRKFK).

The protein belongs to the bacterial ribosomal protein bS21 family.

The polypeptide is Small ribosomal subunit protein bS21 (Desulfitobacterium hafniense (strain DSM 10664 / DCB-2)).